The chain runs to 197 residues: Ribonuclease HII (197 aa).

The region spanning 11–197 (HLIAGVDEVG…FAPVKKILGL (187 aa)) is the RNase H type-2 domain. A divalent metal cation-binding residues include Asp-17, Glu-18, and Asp-109.

The protein belongs to the RNase HII family. It depends on Mn(2+) as a cofactor. Mg(2+) is required as a cofactor.

It is found in the cytoplasm. It catalyses the reaction Endonucleolytic cleavage to 5'-phosphomonoester.. Its function is as follows. Endonuclease that specifically degrades the RNA of RNA-DNA hybrids. This chain is Ribonuclease HII, found in Actinobacillus pleuropneumoniae serotype 7 (strain AP76).